The following is a 158-amino-acid chain: MTTFTHINHQGEANMVDVSAKQDTVREARAEAFVRMSPATLEMILSGQHHKGDVFATARIAGIQAAKRTWELIPLCHPLLLSKVEVNLTALPEISSVRVESICKLSGKTGVEMEALTAASIAALTIYDMCKAVQKDIVIEQVRLLEKSGGKSGHFIAE.

Substrate contacts are provided by residues 75-77 (LCH) and 113-114 (ME). Aspartate 128 is a catalytic residue.

This sequence belongs to the MoaC family. As to quaternary structure, homohexamer; trimer of dimers.

It catalyses the reaction (8S)-3',8-cyclo-7,8-dihydroguanosine 5'-triphosphate = cyclic pyranopterin phosphate + diphosphate. It participates in cofactor biosynthesis; molybdopterin biosynthesis. Catalyzes the conversion of (8S)-3',8-cyclo-7,8-dihydroguanosine 5'-triphosphate to cyclic pyranopterin monophosphate (cPMP). In Histophilus somni (strain 129Pt) (Haemophilus somnus), this protein is Cyclic pyranopterin monophosphate synthase.